The chain runs to 126 residues: DNA-directed RNA polymerase I subunit RPA12 (126 aa).

Zn(2+) contacts are provided by C20, C23, C38, C41, C87, and C90. The C4-type zinc finger occupies 20–41; it reads CSDCGSVLPLPGAQDTVTCIRC. The segment at 83-123 adopts a TFIIS-type zinc-finger fold; it reads VDRRCPRCGHEGMAYHTRQMRSADEGQTVFYTCTNCKFQEK. The Hairpin motif lies at 106–107; sequence DE. 2 residues coordinate Zn(2+): C115 and C118.

Belongs to the archaeal RpoM/eukaryotic RPA12/RPB9/RPC11 RNA polymerase family. Component of the RNA polymerase I (Pol I) complex consisting of 13 subunits: a ten-subunit catalytic core composed of POLR1A/RPA1, POLR1B/RPA2, POLR1C/RPAC1, POLR1D/RPAC2, POLR1H/RPA12, POLR2E/RPABC1, POLR2F/RPABC2, POLR2H/RPABC3, POLR2K/RPABC4 and POLR2L/RPABC5; a mobile stalk subunit POLR1F/RPA43 protruding from the core and additional subunits homologous to general transcription factors POLR1E/RPA49 and POLR1G/RPA34. Part of Pol I pre-initiation complex (PIC), in which Pol I core assembles with RRN3 and promoter-bound UTBF and SL1/TIF-IB complex.

It is found in the nucleus. Its subcellular location is the nucleolus. Its function is as follows. Core component of RNA polymerase I (Pol I), a DNA-dependent RNA polymerase which synthesizes ribosomal RNA precursors using the four ribonucleoside triphosphates as substrates. Can mediate Pol I proofreading of the nascent RNA transcript. Anchors into the Pol I active site to monitor transcription fidelity and cleave mis-incorporated 5'-ribonucleotides. This Homo sapiens (Human) protein is DNA-directed RNA polymerase I subunit RPA12.